We begin with the raw amino-acid sequence, 711 residues long: Glycine--tRNA ligase beta subunit (711 aa).

The protein belongs to the class-II aminoacyl-tRNA synthetase family. Tetramer of two alpha and two beta subunits.

Its subcellular location is the cytoplasm. It carries out the reaction tRNA(Gly) + glycine + ATP = glycyl-tRNA(Gly) + AMP + diphosphate. The protein is Glycine--tRNA ligase beta subunit of Polaromonas naphthalenivorans (strain CJ2).